A 150-amino-acid polypeptide reads, in one-letter code: Large ribosomal subunit protein bL9 (150 aa).

The protein belongs to the bacterial ribosomal protein bL9 family.

Its function is as follows. Binds to the 23S rRNA. This chain is Large ribosomal subunit protein bL9, found in Neisseria gonorrhoeae (strain ATCC 700825 / FA 1090).